A 153-amino-acid chain; its full sequence is Putative adenylate kinase (153 aa).

5 residues coordinate ATP: Gly12, Gly14, Lys15, Ser16, and Thr17. The interval 31–47 (EGNELAKEYGCLFDEEV) is NMP. The LID stretch occupies residues 94–104 (ARGYSEEKIQE). Arg95 lines the ATP pocket.

The protein belongs to the adenylate kinase family. AK6 subfamily. In terms of assembly, interacts with uS11. Not a structural component of 40S pre-ribosomes, but transiently interacts with them by binding to uS11.

It carries out the reaction AMP + ATP = 2 ADP. The catalysed reaction is ATP + H2O = ADP + phosphate + H(+). Functionally, broad-specificity nucleoside monophosphate (NMP) kinase that catalyzes the reversible transfer of the terminal phosphate group between nucleoside triphosphates and monophosphates. Also has ATPase activity. Involved in the late maturation steps of the 30S ribosomal particles, specifically 16S rRNA maturation. While NMP activity is not required for ribosome maturation, ATPase activity is. Associates transiently with small ribosomal subunit protein uS11. ATP hydrolysis breaks the interaction with uS11. May temporarily remove uS11 from the ribosome to enable a conformational change of the ribosomal RNA that is needed for the final maturation step of the small ribosomal subunit. The polypeptide is Putative adenylate kinase (Thermoplasma volcanium (strain ATCC 51530 / DSM 4299 / JCM 9571 / NBRC 15438 / GSS1)).